Reading from the N-terminus, the 147-residue chain is Hemoglobin subunit epsilon (147 aa).

The region spanning 3 to 147 is the Globin domain; sequence HFTAEEKNAI…VANALAHKYH (145 aa). Position 51 is a phosphoserine (S51). Heme b contacts are provided by H64 and H93.

This sequence belongs to the globin family. In terms of assembly, heterotetramer of two alpha chains and two epsilon chains in early embryonic hemoglobin Gower-2; two zeta chains and two epsilon chains in early embryonic hemoglobin Gower-1. In terms of tissue distribution, red blood cells.

In terms of biological role, the epsilon chain is a beta-type chain of early mammalian embryonic hemoglobin. In Sminthopsis crassicaudata (Fat-tailed dunnart), this protein is Hemoglobin subunit epsilon (HBE1).